We begin with the raw amino-acid sequence, 1332 residues long: Aldehyde oxidase 1 (1332 aa).

Positions 4–91 (STLYFYVNGR…GAAVTTVEGV (88 aa)) constitute a 2Fe-2S ferredoxin-type domain. The [2Fe-2S] cluster site is built by Cys43, Cys48, Cys51, and Cys73. Gln112 is a Mo-molybdopterin binding site. 4 residues coordinate [2Fe-2S] cluster: Cys113, Cys116, Cys148, and Cys150. Residue Cys150 coordinates Mo-molybdopterin. Residues 234 to 419 (FTGDRVTWIS…LSVTIPYSRK (186 aa)) form the FAD-binding PCMH-type domain. Residues 262–269 (VVMGNTSV), Ala343, Ser352, His356, Asp365, and Leu409 contribute to the FAD site. Residues 800–801 (AF), Met1041, 1082–1085 (GSVV), Gln1197, and Leu1262 contribute to the Mo-molybdopterin site. Residue Glu1264 is the Proton acceptor; for azaheterocycle hydroxylase activity of the active site.

This sequence belongs to the xanthine dehydrogenase family. Homodimer. [2Fe-2S] cluster serves as cofactor. Requires FAD as cofactor. The cofactor is Mo-molybdopterin. Expressed in liver.

It localises to the cytoplasm. The enzyme catalyses an aldehyde + O2 + H2O = a carboxylate + H2O2 + H(+). It carries out the reaction retinal + O2 + H2O = retinoate + H2O2 + H(+). With respect to regulation, inhibited by menadione and isovanillin. Not inhibited by allopurinol, a xanthine dehydrogenase potent inhibitor. Oxidase with broad substrate specificity, oxidizing aromatic azaheterocycles, such as N1-methylnicotinamide, N-methylphthalazinium and phthalazine, as well as aldehydes, such as benzaldehyde, retinal, pyridoxal, and vanillin. Plays a key role in the metabolism of xenobiotics and drugs containing aromatic azaheterocyclic substituents. Participates in the bioactivation of prodrugs such as famciclovir, catalyzing the oxidation step from 6-deoxypenciclovir to penciclovir, which is a potent antiviral agent. Is probably involved in the regulation of reactive oxygen species homeostasis. May be a prominent source of superoxide generation via the one-electron reduction of molecular oxygen. May also catalyze nitric oxide (NO) production via the reduction of nitrite to NO with NADH or aldehyde as electron donor. May play a role in adipogenesis. This is Aldehyde oxidase 1 from Cavia porcellus (Guinea pig).